Consider the following 201-residue polypeptide: MIEFVKGTIDYVSPQYIVIENGGIGYQVFTPNPFIYKVSNQETIFTYHHIKEDAFSLYGFSTREEKALFTKLLNVTGIGPKGALAILGSGDPGAVIEAIEQEDEAFLVKFPGVGKKTARQIILDLKGKLADVVPEMIDNLFNHEARIEKQEAETALDEALEALRVLGYAEKEIKKVLPHLKEETALSTDQYVKKALQKLLK.

A domain I region spans residues 1 to 61 (MIEFVKGTID…EDAFSLYGFS (61 aa)). The domain II stretch occupies residues 62-140 (TREEKALFTK…DVVPEMIDNL (79 aa)). The tract at residues 141–150 (FNHEARIEKQ) is flexible linker. The domain III stretch occupies residues 151-201 (EAETALDEALEALRVLGYAEKEIKKVLPHLKEETALSTDQYVKKALQKLLK).

It belongs to the RuvA family. In terms of assembly, homotetramer. Forms an RuvA(8)-RuvB(12)-Holliday junction (HJ) complex. HJ DNA is sandwiched between 2 RuvA tetramers; dsDNA enters through RuvA and exits via RuvB. An RuvB hexamer assembles on each DNA strand where it exits the tetramer. Each RuvB hexamer is contacted by two RuvA subunits (via domain III) on 2 adjacent RuvB subunits; this complex drives branch migration. In the full resolvosome a probable DNA-RuvA(4)-RuvB(12)-RuvC(2) complex forms which resolves the HJ.

It localises to the cytoplasm. The RuvA-RuvB-RuvC complex processes Holliday junction (HJ) DNA during genetic recombination and DNA repair, while the RuvA-RuvB complex plays an important role in the rescue of blocked DNA replication forks via replication fork reversal (RFR). RuvA specifically binds to HJ cruciform DNA, conferring on it an open structure. The RuvB hexamer acts as an ATP-dependent pump, pulling dsDNA into and through the RuvAB complex. HJ branch migration allows RuvC to scan DNA until it finds its consensus sequence, where it cleaves and resolves the cruciform DNA. This chain is Holliday junction branch migration complex subunit RuvA, found in Bacillus velezensis (strain DSM 23117 / BGSC 10A6 / LMG 26770 / FZB42) (Bacillus amyloliquefaciens subsp. plantarum).